Consider the following 300-residue polypeptide: Lysenin-related protein 1 (300 aa).

Positions 12-35 (EEIEVDVVSVWKEGYAYENRGNSS) are N-terminal cap domain. The tract at residues 36–109 (VQQKITMTKG…SQVIEHTVTI (74 aa)) is beta-hairpin domain. The segment at 110-158 (PPNKKFTRWKLNADVGGTGIEYMYLIDEVTAIGADLTIPEVNKSRAKIL) is N-terminal cap domain. The interval 159-299 (VGRQIHLGET…EDKWILEVVN (141 aa)) is C-terminal receptor-binding domain. 4 residues coordinate an N-(acyl)-sphingosylphosphocholine: K187, S229, Y235, and Y284. Residues C274 and C285 are joined by a disulfide bond.

Belongs to the lysenin family. As to quaternary structure, binds to sphingomyelin as a monomer by using its C-terminal domain. Forms a nonamer when sphingomyelin/LRP-1 ratio is lower than ca 500. Oligomerization, but not binding, is influenced by the fluidity of sphingomyelin. Expressed by coelomocytes.

The protein localises to the secreted. The protein resides in the target cell membrane. In terms of biological role, pore-forming toxin that specifically binds sphingomyelin in the plasma membrane of various cells. Has hemolytic activity. Binding and hemolytic activities of this toxin are 10 times less than those of lysenin and lysenin-related protein 2. The chain is Lysenin-related protein 1 from Eisenia fetida (Red wiggler worm).